The following is a 197-amino-acid chain: Ribosome maturation factor RimP (197 aa).

This sequence belongs to the RimP family.

The protein resides in the cytoplasm. Functionally, required for maturation of 30S ribosomal subunits. In Acidovorax ebreus (strain TPSY) (Diaphorobacter sp. (strain TPSY)), this protein is Ribosome maturation factor RimP.